Reading from the N-terminus, the 105-residue chain is MTLGRDAMTPLTILSVSETIYHNLLTSMVQDIVSRTTSRQQLQDARYPGLAPLHHDQRGALDVYGRPKPQEASVYFRCPNCSRDLSANRFAAHLERCMSRGARRG.

An SGF11-type zinc finger spans residues 76 to 97; sequence FRCPNCSRDLSANRFAAHLERC.

This sequence belongs to the SGF11 family. As to quaternary structure, component of the 1.8 MDa SAGA transcription coactivator-HAT complex. SAGA is built of 5 distinct domains with specialized functions. Within the SAGA complex, SUS1, SGF11, SGF73 and UBP8 form an additional subcomplex of SAGA called the DUB module (deubiquitination module). Interacts directly with SGF73, SUS1 and UBP8.

It is found in the nucleus. Functionally, functions as a component of the transcription regulatory histone acetylation (HAT) complex SAGA. At the promoters, SAGA is required for recruitment of the basal transcription machinery. It influences RNA polymerase II transcriptional activity through different activities such as TBP interaction and promoter selectivity, interaction with transcription activators, and chromatin modification through histone acetylation and deubiquitination. SAGA acetylates nucleosomal histone H3 to some extent (to form H3K9ac, H3K14ac, H3K18ac and H3K23ac). SAGA interacts with DNA via upstream activating sequences (UASs). Involved in transcriptional regulation of a subset of SAGA-regulated genes. Within the SAGA complex, participates in a subcomplex, that specifically deubiquitinates histones H2B. The chain is SAGA-associated factor 11 from Eremothecium gossypii (strain ATCC 10895 / CBS 109.51 / FGSC 9923 / NRRL Y-1056) (Yeast).